The primary structure comprises 330 residues: Aspartate--ammonia ligase (330 aa).

This sequence belongs to the class-II aminoacyl-tRNA synthetase family. AsnA subfamily.

Its subcellular location is the cytoplasm. The catalysed reaction is L-aspartate + NH4(+) + ATP = L-asparagine + AMP + diphosphate + H(+). Its pathway is amino-acid biosynthesis; L-asparagine biosynthesis; L-asparagine from L-aspartate (ammonia route): step 1/1. The polypeptide is Aspartate--ammonia ligase (Salmonella paratyphi A (strain ATCC 9150 / SARB42)).